Reading from the N-terminus, the 232-residue chain is Biosynthetic peptidoglycan transglycosylase (232 aa).

A helical transmembrane segment spans residues 12-31 (YLLWFMAASVVLVAVLRWVP).

It belongs to the glycosyltransferase 51 family.

The protein resides in the cell inner membrane. It catalyses the reaction [GlcNAc-(1-&gt;4)-Mur2Ac(oyl-L-Ala-gamma-D-Glu-L-Lys-D-Ala-D-Ala)](n)-di-trans,octa-cis-undecaprenyl diphosphate + beta-D-GlcNAc-(1-&gt;4)-Mur2Ac(oyl-L-Ala-gamma-D-Glu-L-Lys-D-Ala-D-Ala)-di-trans,octa-cis-undecaprenyl diphosphate = [GlcNAc-(1-&gt;4)-Mur2Ac(oyl-L-Ala-gamma-D-Glu-L-Lys-D-Ala-D-Ala)](n+1)-di-trans,octa-cis-undecaprenyl diphosphate + di-trans,octa-cis-undecaprenyl diphosphate + H(+). It functions in the pathway cell wall biogenesis; peptidoglycan biosynthesis. In terms of biological role, peptidoglycan polymerase that catalyzes glycan chain elongation from lipid-linked precursors. This chain is Biosynthetic peptidoglycan transglycosylase, found in Pseudomonas aeruginosa (strain ATCC 15692 / DSM 22644 / CIP 104116 / JCM 14847 / LMG 12228 / 1C / PRS 101 / PAO1).